Consider the following 35-residue polypeptide: UPF0387 membrane protein YohO (35 aa).

A helical transmembrane segment spans residues 6 to 26; that stretch reads IGVIALFLLMAIGGIGGVMLA.

This sequence belongs to the UPF0387 family.

The protein localises to the cell inner membrane. The protein is UPF0387 membrane protein YohO of Salmonella paratyphi A (strain ATCC 9150 / SARB42).